The sequence spans 222 residues: L-cystine transport system permease protein TcyL (222 aa).

Over 1–22 the chain is Periplasmic; that stretch reads MQESIQLVIDSLPFLLKGAGYT. In terms of domain architecture, ABC transmembrane type-1 spans 19–207; the sequence is AGYTLQLSIG…IMATVLSTLQ (189 aa). The chain crosses the membrane as a helical span at residues 23–43; sequence LQLSIGGMFFGLLLGFILALM. Topologically, residues 44–64 are cytoplasmic; sequence RLSPIWPVRWLARFYISIFRG. Residues 65–85 form a helical membrane-spanning segment; sequence TPLIAQLFMIYYGLPQFGIEL. Over 86 to 182 the chain is Periplasmic; sequence DPIPSAMIGL…RQAQLITSRT (97 aa). Residues 183–203 form a helical membrane-spanning segment; that stretch reads LEVFTMYLAASLIYWIMATVL. Topologically, residues 204-222 are cytoplasmic; sequence STLQNHFENQLNRQEREPK.

The protein belongs to the binding-protein-dependent transport system permease family. HisMQ subfamily. As to quaternary structure, the complex is composed of two ATP-binding proteins (TcyN), two transmembrane proteins (TcyL) and a solute-binding protein (TcyJ).

It is found in the cell inner membrane. Its function is as follows. Part of the ABC transporter complex TcyJLN involved in L-cystine import. Responsible for the translocation of the substrate across the membrane. This Escherichia coli O6:H1 (strain CFT073 / ATCC 700928 / UPEC) protein is L-cystine transport system permease protein TcyL.